Consider the following 58-residue polypeptide: Protein YecU (58 aa).

This Escherichia coli (strain K12) protein is Protein YecU.